We begin with the raw amino-acid sequence, 107 residues long: Anti-adapter protein IraM (107 aa).

It belongs to the IraM/RssC family.

Its subcellular location is the cytoplasm. Inhibits RpoS proteolysis by regulating RssB activity, thereby increasing the stability of the sigma stress factor RpoS during magnesium starvation. The protein is Anti-adapter protein IraM of Shigella dysenteriae serotype 1 (strain Sd197).